Reading from the N-terminus, the 644-residue chain is Threonine--tRNA ligase (644 aa).

The TGS domain maps to 1-61 (MVAITLPDGS…VADAKVEIVT (61 aa)). A catalytic region spans residues 242 to 533 (DHRKIGKALN…LIENYAGWMP (292 aa)). Positions 333, 384, and 510 each coordinate Zn(2+).

It belongs to the class-II aminoacyl-tRNA synthetase family. Homodimer. Zn(2+) serves as cofactor.

It is found in the cytoplasm. It catalyses the reaction tRNA(Thr) + L-threonine + ATP = L-threonyl-tRNA(Thr) + AMP + diphosphate + H(+). Catalyzes the attachment of threonine to tRNA(Thr) in a two-step reaction: L-threonine is first activated by ATP to form Thr-AMP and then transferred to the acceptor end of tRNA(Thr). Also edits incorrectly charged L-seryl-tRNA(Thr). The sequence is that of Threonine--tRNA ligase from Psychrobacter arcticus (strain DSM 17307 / VKM B-2377 / 273-4).